A 315-amino-acid polypeptide reads, in one-letter code: Acetyl-coenzyme A carboxylase carboxyl transferase subunit alpha (315 aa).

The region spanning 32–289 is the CoA carboxyltransferase C-terminal domain; the sequence is EIDLLEASLE…KQAFVDQLEQ (258 aa).

This sequence belongs to the AccA family. Acetyl-CoA carboxylase is a heterohexamer composed of biotin carboxyl carrier protein (AccB), biotin carboxylase (AccC) and two subunits each of ACCase subunit alpha (AccA) and ACCase subunit beta (AccD).

Its subcellular location is the cytoplasm. The enzyme catalyses N(6)-carboxybiotinyl-L-lysyl-[protein] + acetyl-CoA = N(6)-biotinyl-L-lysyl-[protein] + malonyl-CoA. Its pathway is lipid metabolism; malonyl-CoA biosynthesis; malonyl-CoA from acetyl-CoA: step 1/1. Functionally, component of the acetyl coenzyme A carboxylase (ACC) complex. First, biotin carboxylase catalyzes the carboxylation of biotin on its carrier protein (BCCP) and then the CO(2) group is transferred by the carboxyltransferase to acetyl-CoA to form malonyl-CoA. The sequence is that of Acetyl-coenzyme A carboxylase carboxyl transferase subunit alpha from Staphylococcus haemolyticus (strain JCSC1435).